Here is a 451-residue protein sequence, read N- to C-terminus: 3-phosphoshikimate 1-carboxyvinyltransferase (451 aa).

3-phosphoshikimate contacts are provided by K30, S31, and R35. K30 is a binding site for phosphoenolpyruvate. Positions 103 and 131 each coordinate phosphoenolpyruvate. The 3-phosphoshikimate site is built by S176, Q178, D329, and K356. Q178 is a binding site for phosphoenolpyruvate. The active-site Proton acceptor is the D329. Phosphoenolpyruvate contacts are provided by R360 and R404.

It belongs to the EPSP synthase family. In terms of assembly, monomer.

It localises to the cytoplasm. The catalysed reaction is 3-phosphoshikimate + phosphoenolpyruvate = 5-O-(1-carboxyvinyl)-3-phosphoshikimate + phosphate. Its pathway is metabolic intermediate biosynthesis; chorismate biosynthesis; chorismate from D-erythrose 4-phosphate and phosphoenolpyruvate: step 6/7. Catalyzes the transfer of the enolpyruvyl moiety of phosphoenolpyruvate (PEP) to the 5-hydroxyl of shikimate-3-phosphate (S3P) to produce enolpyruvyl shikimate-3-phosphate and inorganic phosphate. The protein is 3-phosphoshikimate 1-carboxyvinyltransferase of Parvibaculum lavamentivorans (strain DS-1 / DSM 13023 / NCIMB 13966).